We begin with the raw amino-acid sequence, 162 residues long: Protein S40-4 (162 aa).

The protein belongs to the senescence regulator S40 family.

The protein localises to the cytoplasm. The sequence is that of Protein S40-4 from Arabidopsis thaliana (Mouse-ear cress).